Here is a 457-residue protein sequence, read N- to C-terminus: Argininosuccinate lyase (457 aa).

It belongs to the lyase 1 family. Argininosuccinate lyase subfamily.

The protein resides in the cytoplasm. The enzyme catalyses 2-(N(omega)-L-arginino)succinate = fumarate + L-arginine. It participates in amino-acid biosynthesis; L-arginine biosynthesis; L-arginine from L-ornithine and carbamoyl phosphate: step 3/3. This Shigella sonnei (strain Ss046) protein is Argininosuccinate lyase.